The chain runs to 299 residues: Non-structural protein V (299 aa).

Disordered regions lie at residues 30–101 (QEVS…EEDT) and 128–163 (SLMVPAGPPSNRGFEGREGSLDDSIEDSSEDYSEGN). Residues 79-99 (EDQRGREDNTAPVEAKDRIEE) are compositionally biased toward basic and acidic residues. Positions 148 to 160 (LDDSIEDSSEDYS) are enriched in acidic residues. Zn(2+) is bound by residues H232, C251, C255, C267, C269, C272, C276, and C279.

In terms of biological role, blocks host interferon signaling. This chain is Non-structural protein V (P/V), found in Phocidae (true seals).